Reading from the N-terminus, the 91-residue chain is Large ribosomal subunit protein bL31B (91 aa).

It belongs to the bacterial ribosomal protein bL31 family. Type B subfamily. In terms of assembly, part of the 50S ribosomal subunit.

The protein is Large ribosomal subunit protein bL31B of Neisseria gonorrhoeae (strain ATCC 700825 / FA 1090).